A 320-amino-acid polypeptide reads, in one-letter code: Putative movement protein (320 aa).

Active-site residues include H144, D171, and S199. The disordered stretch occupies residues 251–320 (RRSRSISAKR…GKGNSDGSSP (70 aa)). The span at 278 to 289 (RIERFGKDEFGR) shows a compositional bias: basic and acidic residues.

This sequence belongs to the tobamoviruses movement protein family.

Functionally, may play a role in viral cell to cell movement by increasing the size exclusion limit of plasmodesmata and forming a complex with viral RNA to assist its movement. May also have a papain-like protease activity and cleave the genome polyprotein. In Malus sylvestris (European crab apple), this protein is Putative movement protein.